We begin with the raw amino-acid sequence, 392 residues long: Methylthioribose-1-phosphate isomerase (392 aa).

Aspartate 268 functions as the Proton donor in the catalytic mechanism.

It belongs to the eIF-2B alpha/beta/delta subunits family. MtnA subfamily.

It localises to the cytoplasm. The protein resides in the nucleus. It catalyses the reaction 5-(methylsulfanyl)-alpha-D-ribose 1-phosphate = 5-(methylsulfanyl)-D-ribulose 1-phosphate. Its pathway is amino-acid biosynthesis; L-methionine biosynthesis via salvage pathway; L-methionine from S-methyl-5-thio-alpha-D-ribose 1-phosphate: step 1/6. Functionally, catalyzes the interconversion of methylthioribose-1-phosphate (MTR-1-P) into methylthioribulose-1-phosphate (MTRu-1-P). This is Methylthioribose-1-phosphate isomerase from Ajellomyces capsulatus (strain G186AR / H82 / ATCC MYA-2454 / RMSCC 2432) (Darling's disease fungus).